The chain runs to 429 residues: MLVVKKTPKINGILNAPPSKSYTHRAVICASLANGLSNLKNPLNGADCLSSAHACEMFGAEIELSDEQWVIRGSELKTPDNIVDIGNSGTTLRILTGISSQISNGYTILTGDDSIRKRPMQPLLDALKQLGIESFSTKNNGTAPIVVKSGKISNNVVEIRGDMSSQFITSLMMTLPFSENDSKIVLTTPLKSEPYLNITIDVLDKFGVKIEKNEEKNKLGYKIKGNQRYSPCEYIIEGDYSSASYLVAAGVLLNSDIVIKNVFKNSKQGDREIIEIVKKMGADVEINEDNVKITGPYNLKGIEIDVTDIPDLVPTIAVLGCFAEGKTVVYNGEHVRIKECDRLAACTLELSKMGAEIEEKKDGLIITGVHKLNGAKLKTYHDHRLVMAFTIAGMLADGETIIEGEDSVKISFPDFVDKMKSIGSNIEVI.

3-phosphoshikimate is bound by residues K20, S21, and R25. Residue K20 coordinates phosphoenolpyruvate. Residues G89 and R118 each contribute to the phosphoenolpyruvate site. The 3-phosphoshikimate site is built by S164, S165, Q166, S192, D311, and K338. Q166 is a binding site for phosphoenolpyruvate. The Proton acceptor role is filled by D311. The phosphoenolpyruvate site is built by R342 and R384.

The protein belongs to the EPSP synthase family. In terms of assembly, monomer.

The protein resides in the cytoplasm. The enzyme catalyses 3-phosphoshikimate + phosphoenolpyruvate = 5-O-(1-carboxyvinyl)-3-phosphoshikimate + phosphate. It participates in metabolic intermediate biosynthesis; chorismate biosynthesis. In terms of biological role, catalyzes the transfer of the enolpyruvyl moiety of phosphoenolpyruvate (PEP) to the 5-hydroxyl of shikimate-3-phosphate (S3P) to produce enolpyruvyl shikimate-3-phosphate and inorganic phosphate. The protein is 3-phosphoshikimate 1-carboxyvinyltransferase of Methanococcus maripaludis (strain C6 / ATCC BAA-1332).